Reading from the N-terminus, the 360-residue chain is Cyclin-Y-like protein 2 (360 aa).

In terms of domain architecture, Cyclin N-terminal spans 204 to 286 (RLTAEFAIVS…FLKLINYNIG (83 aa)).

The protein belongs to the cyclin family. Cyclin Y subfamily.

In Macaca fascicularis (Crab-eating macaque), this protein is Cyclin-Y-like protein 2 (CCNYL2).